We begin with the raw amino-acid sequence, 310 residues long: Nodulation protein D 1 (310 aa).

An HTH lysR-type domain is found at 6 to 63; the sequence is LDLNLLVALDALMTERQLTAAARRINLSQPAMSAAIARLRNYFHDDLFVMQGRELILT. Residues 23-42 constitute a DNA-binding region (H-T-H motif); it reads LTAAARRINLSQPAMSAAIA.

It belongs to the LysR transcriptional regulatory family.

NodD regulates the expression of the nodABCFE genes which encode other nodulation proteins. NodD is also a negative regulator of its own expression. Binds flavonoids as inducers. The protein is Nodulation protein D 1 (nodD1) of Neorhizobium galegae (Rhizobium galegae).